A 352-amino-acid polypeptide reads, in one-letter code: Photosystem II D2 protein (352 aa).

The Cytoplasmic portion of the chain corresponds to 1–31 (MTIAVGRAPVERGWFDVLDDWLKRDRFVFIG). A helical transmembrane segment spans residues 32 to 53 (WSGLLLFPCAFMALGGWLTGTT). Over 54–108 (FVTSWYTHGLASSYLEGANFLTVAVSSPADAFGHSLLFLWGPEAQGNLTRWFQIG) the chain is Lumenal, thylakoid. A helical membrane pass occupies residues 109–131 (GLWPFVALHGAFGLIGFMLRQFE). Chlorophyll a is bound at residue His117. Residue Gln129 coordinates pheophytin a. Topologically, residues 132 to 140 (ISRLVGIRP) are cytoplasmic. A helical membrane pass occupies residues 141-162 (YNAIAFSGPIAVFVSVFLMYPL). Asn142 provides a ligand contact to pheophytin a. Over 163 to 190 (GQSSWFFAPSFGVAGIFRFILFLQGFHN) the chain is Lumenal, thylakoid. Residues 191–217 (WTLNPFHMMGVAGILGGALLCAIHGAT) traverse the membrane as a helical segment. His197 contributes to the chlorophyll a binding site. A plastoquinone is bound by residues His214 and Phe261. His214 contacts Fe cation. The Cytoplasmic portion of the chain corresponds to 218–265 (VENTLFEDGEDSNTFRAFEPTQAEETYSMVTANRFWSQIFGIAFSNKR). Residues 266 to 288 (WLHFFMLFVPVTGLWMSSVGIVG) form a helical membrane-spanning segment. His268 is a binding site for Fe cation. Residues 289-352 (LALNLRAYDF…EEVLPRGNAL (64 aa)) lie on the Lumenal, thylakoid side of the membrane.

It belongs to the reaction center PufL/M/PsbA/D family. As to quaternary structure, PSII is composed of 1 copy each of membrane proteins PsbA, PsbB, PsbC, PsbD, PsbE, PsbF, PsbH, PsbI, PsbJ, PsbK, PsbL, PsbM, PsbT, PsbX, PsbY, PsbZ, Psb30/Ycf12, peripheral proteins PsbO, CyanoQ (PsbQ), PsbU, PsbV and a large number of cofactors. It forms dimeric complexes. The D1/D2 heterodimer binds P680, chlorophylls that are the primary electron donor of PSII, and subsequent electron acceptors. It shares a non-heme iron and each subunit binds pheophytin, quinone, additional chlorophylls, carotenoids and lipids. There is also a Cl(-1) ion associated with D1 and D2, which is required for oxygen evolution. The PSII complex binds additional chlorophylls, carotenoids and specific lipids. serves as cofactor.

The protein resides in the cellular thylakoid membrane. The catalysed reaction is 2 a plastoquinone + 4 hnu + 2 H2O = 2 a plastoquinol + O2. Its function is as follows. Photosystem II (PSII) is a light-driven water:plastoquinone oxidoreductase that uses light energy to abstract electrons from H(2)O, generating O(2) and a proton gradient subsequently used for ATP formation. It consists of a core antenna complex that captures photons, and an electron transfer chain that converts photonic excitation into a charge separation. The D1/D2 (PsbA/PsbD) reaction center heterodimer binds P680, the primary electron donor of PSII as well as several subsequent electron acceptors. D2 is needed for assembly of a stable PSII complex. The sequence is that of Photosystem II D2 protein from Synechocystis sp. (strain ATCC 27184 / PCC 6803 / Kazusa).